We begin with the raw amino-acid sequence, 126 residues long: FCS-Like Zinc finger 17 (126 aa).

The FLZ-type zinc finger occupies 41–85 (CFLKTCHLCNKQLHQDKDVYMYRGDLGFCSRECRESQMLIDDRKE).

Belongs to the FLZ family. In terms of assembly, interacts with KIN10 and KIN11 via its FLZ-type zinc finger domain. Forms heterodimer with FLZ2 in vitro.

The protein resides in the nucleus. The protein localises to the cytoplasm. May act as an adapter to facilitate the interaction of SnRK1 complex with effector proteins, conferring tissue- and stimulus-type specific differences in the SnRK1 regulation pathway. In Arabidopsis thaliana (Mouse-ear cress), this protein is FCS-Like Zinc finger 17.